The primary structure comprises 487 residues: Cyclic AMP-dependent transcription factor ATF-2 (487 aa).

The C2H2-type zinc-finger motif lies at 7–31 (FLCTAPGCGQRFTNEDHLAVHKHKH). T34 is modified (phosphothreonine; by PKC/PRKCH). The residue at position 44 (S44) is a Phosphoserine; by VRK1. Phosphothreonine is present on residues T51 and T53. Position 55 is a phosphothreonine; by VRK1 (T55). S72 and S94 each carry phosphoserine. Residue T98 is modified to Phosphothreonine. S103 is modified (phosphoserine; by PKC/PRKCA and PKC/PRKCB). Disordered regions lie at residues 107-130 (EPSV…TNDE) and 241-355 (PGIP…RQKR). S118 is modified (phosphoserine). The segment covering 264–275 (LTQQHPPVTNGD) has biased composition (polar residues). Positions 278-281 (KGHG) are essential for its histone acetyltransferase activity. The segment covering 300–316 (PATSTTETPASPAHTTP) has biased composition (low complexity). Position 310 is a phosphoserine (S310). Position 322 is a phosphoserine; by PKC/PRKCA and PKC/PRKCB (S322). Positions 328-345 (AANEDPDEKRRKFLERNR) are enriched in basic and acidic residues. The bZIP domain maps to 334-397 (DEKRRKFLER…AQLKQLLLAH (64 aa)). The segment at 336 to 356 (KRRKFLERNRAAASRCRQKRK) is basic motif. N6-acetyllysine is present on K339. Phosphoserine; by PKC/PRKCA and PKC/PRKCB is present on S349. K356 is modified (N6-acetyllysine). Residues 362–390 (LEKKAEDLSSLNGQLQSEVTLLRNEVAQL) form a leucine-zipper region. The Nuclear export signal motif lies at 387 to 396 (VAQLKQLLLA). The tract at residues 407-487 (KKSGYHTADK…PSSQAQPSGS (81 aa)) is disordered. Residues S424 and S428 each carry the phosphoserine modification. A compositionally biased stretch (polar residues) spans 425 to 436 (VPSSPHTEAIQH). Residues 437-449 (SSVSTSNGVSSTS) are compositionally biased toward low complexity. The span at 457–470 (SVLTQMADQSTEPA) shows a compositional bias: polar residues. A phosphoserine; by ATM mark is found at S472 and S480. Residues 478 to 487 (PSSQAQPSGS) are compositionally biased toward polar residues.

The protein belongs to the bZIP family. ATF subfamily. Binds DNA as a dimer and can form a homodimer in the absence of DNA. Can form a heterodimer with JUN. Heterodimerization is essential for its transcriptional activity. Interacts with SMAD3 and SMAD4. Binds through its N-terminal region to UTF1 which acts as a coactivator of ATF2 transcriptional activity. Interacts with the HK1/VDAC1 complex. Interacts with NBN, MRE11, XPO1, KAT5 and CUL3. In terms of processing, phosphorylation of Thr-51 by MAPK14 and MAPK11, and at Thr-53 by MAPK1/ERK2, MAPK3/ERK1, MAPK11, MAPK12 and MAPK14 in response to external stimulus like insulin causes increased transcriptional activity. Phosphorylated by PLK3 following hyperosmotic stress. Also phosphorylated and activated by JNK and CaMK4. ATM-mediated phosphorylation at Ser-472 and Ser-480 stimulates its function in DNA damage response. Phosphorylation at Ser-44, Thr-55 and Ser-103 activates its transcriptional activity. Phosphorylation at Thr-51 or Thr-53 enhances acetylation of histones H2B and H4.

The protein localises to the nucleus. Its subcellular location is the cytoplasm. The protein resides in the mitochondrion outer membrane. Transcriptional activator which regulates the transcription of various genes, including those involved in anti-apoptosis, cell growth, and DNA damage response. Dependent on its binding partner, binds to CRE (cAMP response element) consensus sequences (5'-TGACGTCA-3') or to AP-1 (activator protein 1) consensus sequences (5'-TGACTCA-3'). In the nucleus, contributes to global transcription and the DNA damage response, in addition to specific transcriptional activities that are related to cell development, proliferation and death. In the cytoplasm, interacts with and perturbs HK1- and VDAC1-containing complexes at the mitochondrial outer membrane, thereby impairing mitochondrial membrane potential, inducing mitochondrial leakage and promoting cell death. The phosphorylated form (mediated by ATM) plays a role in the DNA damage response and is involved in the ionizing radiation (IR)-induced S phase checkpoint control and in the recruitment of the MRN complex into the IR-induced foci (IRIF). Exhibits histone acetyltransferase (HAT) activity which specifically acetylates histones H2B and H4 in vitro. In concert with CUL3 and RBX1, promotes the degradation of KAT5 thereby attenuating its ability to acetylate and activate ATM. Can elicit oncogenic or tumor suppressor activities depending on the tissue or cell type. The sequence is that of Cyclic AMP-dependent transcription factor ATF-2 (Atf2) from Rattus norvegicus (Rat).